The sequence spans 227 residues: 7-cyano-7-deazaguanine synthase (227 aa).

8-18 lines the ATP pocket; sequence FSGGQDSTTCL. Zn(2+)-binding residues include Cys187, Cys196, Cys199, and Cys202.

This sequence belongs to the QueC family. Requires Zn(2+) as cofactor.

It carries out the reaction 7-carboxy-7-deazaguanine + NH4(+) + ATP = 7-cyano-7-deazaguanine + ADP + phosphate + H2O + H(+). Its pathway is purine metabolism; 7-cyano-7-deazaguanine biosynthesis. Its function is as follows. Catalyzes the ATP-dependent conversion of 7-carboxy-7-deazaguanine (CDG) to 7-cyano-7-deazaguanine (preQ(0)). This Shewanella pealeana (strain ATCC 700345 / ANG-SQ1) protein is 7-cyano-7-deazaguanine synthase.